Consider the following 112-residue polypeptide: Citrate synthase (112 aa).

Active-site residues include histidine 39 and aspartate 97.

The protein belongs to the citrate synthase family.

It catalyses the reaction oxaloacetate + acetyl-CoA + H2O = citrate + CoA + H(+). It participates in carbohydrate metabolism; tricarboxylic acid cycle; isocitrate from oxaloacetate: step 1/2. The sequence is that of Citrate synthase (gltA) from Bartonella vinsonii subsp. berkhoffii.